The sequence spans 160 residues: Cytochrome b6-f complex subunit 4 (160 aa).

The next 3 helical transmembrane spans lie at 36 to 56, 95 to 115, and 131 to 151; these read LLYI…GLAI, LLGV…PFLE, and TVFL…TLPI.

This sequence belongs to the cytochrome b family. PetD subfamily. As to quaternary structure, the 4 large subunits of the cytochrome b6-f complex are cytochrome b6, subunit IV (17 kDa polypeptide, petD), cytochrome f and the Rieske protein, while the 4 small subunits are petG, petL, petM and petN. The complex functions as a dimer.

The protein resides in the plastid. It localises to the chloroplast thylakoid membrane. Component of the cytochrome b6-f complex, which mediates electron transfer between photosystem II (PSII) and photosystem I (PSI), cyclic electron flow around PSI, and state transitions. This Oenothera elata subsp. hookeri (Hooker's evening primrose) protein is Cytochrome b6-f complex subunit 4.